The following is a 650-amino-acid chain: Secretin OutD (650 aa).

Residues 1–18 form the signal peptide; sequence MLLLSGSVLLMASSLAWS. An N0 region spans residues 20–115; sequence EFSASFKGTD…LATDRQPGIG (96 aa). An N1 region spans residues 117–181; sequence EVVTRVVPVN…TIVERVDQTG (65 aa). Residues 182–255 are N2; that stretch reads DRNVTTIPLS…MVKQLDRQQA (74 aa). The N3 stretch occupies residues 258–330; that stretch reads GNTKVIYLKY…DLEQVIAQLD (73 aa). The segment at 335–585 is secretin; sequence QVLVEAIIAE…LFIRPSIIRD (251 aa). Residues 587-650 are s domain; that stretch reads SQFQSASASK…IVAFYPAGGK (64 aa).

Belongs to the bacterial secretin family. GSP D subfamily. In terms of assembly, forms a cylindrical channel with 15 subunits.

Its subcellular location is the cell outer membrane. Its function is as follows. Involved in a type II secretion system (T2SS, formerly general secretion pathway, GSP) for the export of proteins. Required for the translocation of the multiple pectic enzymes. This subunit forms the outer membrane channel. In Pectobacterium carotovorum subsp. carotovorum (Erwinia carotovora subsp. carotovora), this protein is Secretin OutD (outD).